A 286-amino-acid chain; its full sequence is Glycine--tRNA ligase alpha subunit (286 aa).

This sequence belongs to the class-II aminoacyl-tRNA synthetase family. Tetramer of two alpha and two beta subunits.

It is found in the cytoplasm. The catalysed reaction is tRNA(Gly) + glycine + ATP = glycyl-tRNA(Gly) + AMP + diphosphate. The polypeptide is Glycine--tRNA ligase alpha subunit (Campylobacter concisus (strain 13826)).